Consider the following 905-residue polypeptide: Protein translocase subunit SecA (905 aa).

Residues Q89, 107–111, and D502 each bind ATP; that span reads GEGKT. The disordered stretch occupies residues 837 to 885; that stretch reads EQTDVGDPILNDQNKKNSSTLWTPSQENKFVNPKDRNPSDSTTWGKVGR. Over residues 852 to 865 the composition is skewed to polar residues; the sequence is KNSSTLWTPSQENK. Zn(2+)-binding residues include C889, C891, C900, and H901.

This sequence belongs to the SecA family. In terms of assembly, monomer and homodimer. Part of the essential Sec protein translocation apparatus which comprises SecA, SecYEG and auxiliary proteins SecDF-YajC and YidC. Requires Zn(2+) as cofactor.

The protein localises to the cell inner membrane. The protein resides in the cytoplasm. The enzyme catalyses ATP + H2O + cellular proteinSide 1 = ADP + phosphate + cellular proteinSide 2.. Functionally, part of the Sec protein translocase complex. Interacts with the SecYEG preprotein conducting channel. Has a central role in coupling the hydrolysis of ATP to the transfer of proteins into and across the cell membrane, serving both as a receptor for the preprotein-SecB complex and as an ATP-driven molecular motor driving the stepwise translocation of polypeptide chains across the membrane. The sequence is that of Protein translocase subunit SecA from Bartonella henselae (strain ATCC 49882 / DSM 28221 / CCUG 30454 / Houston 1) (Rochalimaea henselae).